A 248-amino-acid polypeptide reads, in one-letter code: tRNA pseudouridine synthase A (248 aa).

Asp-54 acts as the Nucleophile in catalysis. Substrate is bound at residue Tyr-112.

The protein belongs to the tRNA pseudouridine synthase TruA family. Homodimer.

The catalysed reaction is uridine(38/39/40) in tRNA = pseudouridine(38/39/40) in tRNA. In terms of biological role, formation of pseudouridine at positions 38, 39 and 40 in the anticodon stem and loop of transfer RNAs. The chain is tRNA pseudouridine synthase A from Geobacillus sp. (strain WCH70).